The following is a 486-amino-acid chain: MTTFYTVVSWLVILGYWLLIAGVTLRILMKRRAVPSAMAWLLIIYILPLVGIIAYLSFGELHLGKRRAERARAMWPSTAKWLNDLKSCKHIFAEENSSVASSLFKLCERRQGIAGVKGNQLQLLTDSDDVMQALIRDIQLARHNIEMVFYIWQPGGMADKVAESLMAAARRGIHCRLMLDSAGSVAFFRSPWAAMMRNAGIEVVEALKVNLMRVFLRRMDLRQHRKMIMIDNYIAYTGSMNMVDPRFFKQDAGVGQWVDVMARMEGPIATAMGVIYSCDWEIETGKRILPPPPDVNIMPFEQASGHTIHTIASGPGFPEDLIHQALLTATYSAREYLIMTTPYFVPSDDLLHAICTAAQRGVDVSIILPRKNDSMLVGWASRAFFTELLAAGVKIYQFEGGLLHTKSVLVDGELSLVGTVNLDMRSLWLNFEITLAIDDKGFGADLAAVQDDYISRSRLLDERLWLKRPLWQRVAERLFYFFSPLL.

2 consecutive transmembrane segments (helical) span residues 3–23 (TFYTVVSWLVILGYWLLIAGV) and 38–58 (MAWLLIIYILPLVGIIAYLSF). PLD phosphodiesterase domains are found at residues 219–246 (MDLRQHRKMIMIDNYIAYTGSMNMVDPR) and 399–426 (EGGLLHTKSVLVDGELSLVGTVNLDMRS). Residues His224, Lys226, Asp231, His404, Lys406, and Asp411 contribute to the active site.

This sequence belongs to the phospholipase D family. Cardiolipin synthase subfamily. ClsA sub-subfamily.

The protein resides in the cell inner membrane. The enzyme catalyses 2 a 1,2-diacyl-sn-glycero-3-phospho-(1'-sn-glycerol) = a cardiolipin + glycerol. Functionally, catalyzes the reversible phosphatidyl group transfer from one phosphatidylglycerol molecule to another to form cardiolipin (CL) (diphosphatidylglycerol) and glycerol. The chain is Cardiolipin synthase A from Escherichia fergusonii (strain ATCC 35469 / DSM 13698 / CCUG 18766 / IAM 14443 / JCM 21226 / LMG 7866 / NBRC 102419 / NCTC 12128 / CDC 0568-73).